The following is a 543-amino-acid chain: Mitochondrial distribution and morphology protein 34 (543 aa).

Residues 1–202 form the SMP-LTD domain; it reads MSFNVNWNSL…LPTLLHKVSL (202 aa). Residues 519–543 are disordered; the sequence is AFSHNDPSITPFELPPPPYHQLSRA.

The protein belongs to the MDM34 family. Component of the ER-mitochondria encounter structure (ERMES) or MDM complex, composed of MMM1, MDM10, MDM12 and MDM34.

The protein localises to the mitochondrion outer membrane. Its function is as follows. Component of the ERMES/MDM complex, which serves as a molecular tether to connect the endoplasmic reticulum (ER) and mitochondria. Components of this complex are involved in the control of mitochondrial shape and protein biogenesis, and function in nonvesicular lipid trafficking between the ER and mitochondria. MDM34 is required for the interaction of the ER-resident membrane protein MMM1 and the outer mitochondrial membrane-resident beta-barrel protein MDM10. The protein is Mitochondrial distribution and morphology protein 34 of Clavispora lusitaniae (strain ATCC 42720) (Yeast).